We begin with the raw amino-acid sequence, 320 residues long: Cytochrome f (320 aa).

The N-terminal stretch at 1 to 35 (MNFFTHKKNNFGSFVTIFSFLVALGVTNLTPAAEA) is a signal peptide. Tyr36, Cys56, Cys59, and His60 together coordinate heme. Residues 286–306 (IQGLLVFFATVLFAQVLLVLK) form a helical membrane-spanning segment.

Belongs to the cytochrome f family. The 4 large subunits of the cytochrome b6-f complex are cytochrome b6, subunit IV (17 kDa polypeptide, petD), cytochrome f and the Rieske protein, while the 4 small subunits are PetG, PetL, PetM and PetN. The complex functions as a dimer. The cofactor is heme.

The protein localises to the plastid. Its subcellular location is the chloroplast thylakoid membrane. In terms of biological role, component of the cytochrome b6-f complex, which mediates electron transfer between photosystem II (PSII) and photosystem I (PSI), cyclic electron flow around PSI, and state transitions. The protein is Cytochrome f of Tetradesmus obliquus (Green alga).